Reading from the N-terminus, the 181-residue chain is ATP-dependent protease subunit HslV (181 aa).

Thr-7 is an active-site residue. Ala-162, Cys-165, and Thr-168 together coordinate Na(+).

The protein belongs to the peptidase T1B family. HslV subfamily. A double ring-shaped homohexamer of HslV is capped on each side by a ring-shaped HslU homohexamer. The assembly of the HslU/HslV complex is dependent on binding of ATP.

The protein resides in the cytoplasm. It catalyses the reaction ATP-dependent cleavage of peptide bonds with broad specificity.. Allosterically activated by HslU binding. In terms of biological role, protease subunit of a proteasome-like degradation complex believed to be a general protein degrading machinery. This chain is ATP-dependent protease subunit HslV, found in Coxiella burnetii (strain Dugway 5J108-111).